Here is a 226-residue protein sequence, read N- to C-terminus: Leucyl/phenylalanyl-tRNA--protein transferase (226 aa).

This sequence belongs to the L/F-transferase family.

It is found in the cytoplasm. The enzyme catalyses N-terminal L-lysyl-[protein] + L-leucyl-tRNA(Leu) = N-terminal L-leucyl-L-lysyl-[protein] + tRNA(Leu) + H(+). It carries out the reaction N-terminal L-arginyl-[protein] + L-leucyl-tRNA(Leu) = N-terminal L-leucyl-L-arginyl-[protein] + tRNA(Leu) + H(+). It catalyses the reaction L-phenylalanyl-tRNA(Phe) + an N-terminal L-alpha-aminoacyl-[protein] = an N-terminal L-phenylalanyl-L-alpha-aminoacyl-[protein] + tRNA(Phe). Functions in the N-end rule pathway of protein degradation where it conjugates Leu, Phe and, less efficiently, Met from aminoacyl-tRNAs to the N-termini of proteins containing an N-terminal arginine or lysine. The sequence is that of Leucyl/phenylalanyl-tRNA--protein transferase from Azotobacter vinelandii (strain DJ / ATCC BAA-1303).